The following is a 191-amino-acid chain: Divergent paired-related homeobox (191 aa).

Residues 1 to 15 (MPGSEDLRKGKDQMH) are compositionally biased toward basic and acidic residues. Residues 1–20 (MPGSEDLRKGKDQMHSHRKR) form a disordered region. Residues 16-75 (SHRKRTMFTKKQLEDLNILFNENPYPNPSLQKEMASKIDIHPTVLQVWFKNHRAKLKKAK) constitute a DNA-binding region (homeobox).

It belongs to the paired homeobox family.

It is found in the nucleus. Its function is as follows. Transcription factor that acts as a repressor. The chain is Divergent paired-related homeobox from Homo sapiens (Human).